A 352-amino-acid polypeptide reads, in one-letter code: Histidinol-phosphate aminotransferase (352 aa).

N6-(pyridoxal phosphate)lysine is present on Lys-210.

It belongs to the class-II pyridoxal-phosphate-dependent aminotransferase family. Histidinol-phosphate aminotransferase subfamily. As to quaternary structure, homodimer. Pyridoxal 5'-phosphate serves as cofactor.

It carries out the reaction L-histidinol phosphate + 2-oxoglutarate = 3-(imidazol-4-yl)-2-oxopropyl phosphate + L-glutamate. It functions in the pathway amino-acid biosynthesis; L-histidine biosynthesis; L-histidine from 5-phospho-alpha-D-ribose 1-diphosphate: step 7/9. This Clostridium acetobutylicum (strain ATCC 824 / DSM 792 / JCM 1419 / IAM 19013 / LMG 5710 / NBRC 13948 / NRRL B-527 / VKM B-1787 / 2291 / W) protein is Histidinol-phosphate aminotransferase.